The primary structure comprises 1198 residues: Spindle-defective protein 5 (1198 aa).

Over residues 1–10 (MEDNSVLNED) the composition is skewed to polar residues. Residues 1–45 (MEDNSVLNEDSNLEHVEGQPRRSMSQPVLNVEGDKRTSSTSATQQ) are disordered. 5 coiled-coil regions span residues 67–381 (EENK…QLTG), 566–603 (HDVAVNVEQMQEKMSQIREALARLFERLKSSAALFEEI), 694–916 (KFTS…LSTS), 983–1035 (DELC…ENVP), and 1127–1175 (KNET…EFQD).

The protein localises to the cytoplasm. The protein resides in the cytoskeleton. Its subcellular location is the microtubule organizing center. It is found in the centrosome. Plays a central role in centrosome maturation and mitotic spindle assembly during the first division of the zygote. Required for the centrosomal localization of air-1 and zyg-9. Probably not required in late embryogenesis and during larval development. The polypeptide is Spindle-defective protein 5 (spd-5) (Caenorhabditis elegans).